Consider the following 358-residue polypeptide: Probable anti-sigma-M factor YhdL (358 aa).

Residues 74 to 96 form a helical membrane-spanning segment; sequence ISVLAVISTLMILPLCTLGSYLY.

In terms of assembly, the N-terminus of YhdL interacts with sigma-M. YhdL interacts specifically with YhdK.

The protein resides in the membrane. The polypeptide is Probable anti-sigma-M factor YhdL (yhdL) (Bacillus subtilis (strain 168)).